The following is a 107-amino-acid chain: Putative ATP synthase subunit f, mitochondrial (107 aa).

Belongs to the ATPase F chain family. F-type ATPases have 2 components, CF(1) - the catalytic core - and CF(0) - the membrane proton channel. CF(0) seems to have nine subunits: a, b, c, d, e, f, g, F6 and 8 (or A6L).

It localises to the mitochondrion membrane. Mitochondrial membrane ATP synthase (F(1)F(0) ATP synthase or Complex V) produces ATP from ADP in the presence of a proton gradient across the membrane which is generated by electron transport complexes of the respiratory chain. F-type ATPases consist of two structural domains, F(1) - containing the extramembraneous catalytic core and F(0) - containing the membrane proton channel, linked together by a central stalk and a peripheral stalk. During catalysis, ATP synthesis in the catalytic domain of F(1) is coupled via a rotary mechanism of the central stalk subunits to proton translocation. Part of the complex F(0) domain. Minor subunit located with subunit a in the membrane. In Drosophila melanogaster (Fruit fly), this protein is Putative ATP synthase subunit f, mitochondrial.